The chain runs to 455 residues: RQC trigger complex subunit RQT4 homolog (455 aa).

2 disordered regions span residues 64-98 (STHSGNSPSIMKNKKNVTPNNNIRQKNTATSSHPS) and 118-148 (PASRNKSQSNNISSHEKSSKTTKNVSPGVMT). 2 stretches are compositionally biased toward polar residues: residues 65-98 (THSGNSPSIMKNKKNVTPNNNIRQKNTATSSHPS) and 119-130 (ASRNKSQSNNIS). Residue S70 is modified to Phosphoserine. S380 is subject to Phosphoserine.

Component of the RQT (ribosome quality control trigger) complex.

The protein resides in the cytoplasm. The protein localises to the cytosol. Functionally, probably functions as part of the RQC trigger (RQT) complex that activates the ribosome quality control (RQC) pathway, a pathway that degrades nascent peptide chains during problematic translation. The chain is RQC trigger complex subunit RQT4 homolog from Schizosaccharomyces pombe (strain 972 / ATCC 24843) (Fission yeast).